The sequence spans 108 residues: Protein S100-A15A (108 aa).

Residues 53-88 (KEPYYVTELFQATDKNRDNQICFDEFLYILGKLVKD) form the EF-hand domain. 5 residues coordinate Ca(2+): aspartate 66, asparagine 68, aspartate 70, glutamine 72, and glutamate 77.

This sequence belongs to the S-100 family.

The polypeptide is Protein S100-A15A (S100A15A) (Gorilla gorilla gorilla (Western lowland gorilla)).